Here is a 323-residue protein sequence, read N- to C-terminus: Acetyl-coenzyme A carboxylase carboxyl transferase subunit alpha (323 aa).

In terms of domain architecture, CoA carboxyltransferase C-terminal spans 39-293 (RLAGKSQQLT…KRSLAESLRQ (255 aa)).

Belongs to the AccA family. In terms of assembly, acetyl-CoA carboxylase is a heterohexamer composed of biotin carboxyl carrier protein (AccB), biotin carboxylase (AccC) and two subunits each of ACCase subunit alpha (AccA) and ACCase subunit beta (AccD).

It localises to the cytoplasm. It catalyses the reaction N(6)-carboxybiotinyl-L-lysyl-[protein] + acetyl-CoA = N(6)-biotinyl-L-lysyl-[protein] + malonyl-CoA. It functions in the pathway lipid metabolism; malonyl-CoA biosynthesis; malonyl-CoA from acetyl-CoA: step 1/1. In terms of biological role, component of the acetyl coenzyme A carboxylase (ACC) complex. First, biotin carboxylase catalyzes the carboxylation of biotin on its carrier protein (BCCP) and then the CO(2) group is transferred by the carboxyltransferase to acetyl-CoA to form malonyl-CoA. This chain is Acetyl-coenzyme A carboxylase carboxyl transferase subunit alpha, found in Cupriavidus metallidurans (strain ATCC 43123 / DSM 2839 / NBRC 102507 / CH34) (Ralstonia metallidurans).